The chain runs to 459 residues: Chromosomal replication initiator protein DnaA (459 aa).

Positions 1-73 (MEIPIESLWS…AHAVQDILGH (73 aa)) are domain I, interacts with DnaA modulators. Residues 73-117 (HPVGIYITVAQGDEVSHFSEREVSWESTNPSSIPESLPHHNHKTT) form a domain II region. Positions 118 to 334 (ELNSKYVFSR…GALIRAVAYI (217 aa)) are domain III, AAA+ region. Positions 162, 164, 165, and 166 each coordinate ATP. A domain IV, binds dsDNA region spans residues 335–459 (SIWGLPMTVE…INMTSRSQKS (125 aa)).

This sequence belongs to the DnaA family. As to quaternary structure, oligomerizes as a right-handed, spiral filament on DNA at oriC.

It is found in the cytoplasm. Its function is as follows. Plays an essential role in the initiation and regulation of chromosomal replication. ATP-DnaA binds to the origin of replication (oriC) to initiate formation of the DNA replication initiation complex once per cell cycle. Binds the DnaA box (a 9 base pair repeat at the origin) and separates the double-stranded (ds)DNA. Forms a right-handed helical filament on oriC DNA; dsDNA binds to the exterior of the filament while single-stranded (ss)DNA is stabiized in the filament's interior. The ATP-DnaA-oriC complex binds and stabilizes one strand of the AT-rich DNA unwinding element (DUE), permitting loading of DNA polymerase. After initiation quickly degrades to an ADP-DnaA complex that is not apt for DNA replication. Binds acidic phospholipids. The polypeptide is Chromosomal replication initiator protein DnaA (Nostoc punctiforme (strain ATCC 29133 / PCC 73102)).